We begin with the raw amino-acid sequence, 335 residues long: Large ribosomal subunit protein uL3 (335 aa).

The interval 1 to 20 is disordered; it reads MATIHRPRRGSLAFSPRKRA.

Belongs to the universal ribosomal protein uL3 family. Part of the 50S ribosomal subunit. Forms a cluster with proteins L14 and L24e.

Functionally, one of the primary rRNA binding proteins, it binds directly near the 3'-end of the 23S rRNA, where it nucleates assembly of the 50S subunit. The polypeptide is Large ribosomal subunit protein uL3 (Methanothrix thermoacetophila (strain DSM 6194 / JCM 14653 / NBRC 101360 / PT) (Methanosaeta thermophila)).